The chain runs to 511 residues: Exodeoxyribonuclease 7 large subunit (511 aa).

Belongs to the XseA family. As to quaternary structure, heterooligomer composed of large and small subunits.

It is found in the cytoplasm. It catalyses the reaction Exonucleolytic cleavage in either 5'- to 3'- or 3'- to 5'-direction to yield nucleoside 5'-phosphates.. Bidirectionally degrades single-stranded DNA into large acid-insoluble oligonucleotides, which are then degraded further into small acid-soluble oligonucleotides. The chain is Exodeoxyribonuclease 7 large subunit from Brucella melitensis biotype 1 (strain ATCC 23456 / CCUG 17765 / NCTC 10094 / 16M).